A 59-amino-acid chain; its full sequence is Large ribosomal subunit protein bL32 (59 aa).

The segment at 1–20 is disordered; the sequence is MAVPRNRHSNARKNIRRSHH.

It belongs to the bacterial ribosomal protein bL32 family.

The sequence is that of Large ribosomal subunit protein bL32 (rpmF) from Chlamydia muridarum (strain MoPn / Nigg).